Reading from the N-terminus, the 241-residue chain is MVSPVTVVKSEGPKLVPFFKATCVYFVLWLPSSSPSWVSALIKCLPIFCLWLFLLAHGVRFLLAHPSASLIFVGLVFSAVGDAFLIWQDHGYFEHGLLMFAVAHILYAAAFGMRPLALRTGLVIGVLSGLCYALLYPGLSGAFTYLVGVYVALISFMGWRAMAGLRLVGAAWRWTELAAGGGALLFILSDLTIALNKFCFPVPYSRALIMSTYYAAQMLIALSAVESREPVGEDYRLSKAD.

Over 1–13 the chain is Cytoplasmic; sequence MVSPVTVVKSEGP. Residues 14–30 traverse the membrane as a helical segment; sequence KLVPFFKATCVYFVLWL. The Extracellular portion of the chain corresponds to 31–36; sequence PSSSPS. Residues 37–59 traverse the membrane as a helical segment; that stretch reads WVSALIKCLPIFCLWLFLLAHGV. The Cytoplasmic portion of the chain corresponds to 60–67; that stretch reads RFLLAHPS. The chain crosses the membrane as a helical span at residues 68–87; it reads ASLIFVGLVFSAVGDAFLIW. At 88–96 the chain is on the extracellular side; sequence QDHGYFEHG. A helical membrane pass occupies residues 97 to 113; the sequence is LLMFAVAHILYAAAFGM. Topologically, residues 114 to 119 are cytoplasmic; the sequence is RPLALR. Residues 120 to 136 form a helical membrane-spanning segment; that stretch reads TGLVIGVLSGLCYALLY. At 137 to 142 the chain is on the extracellular side; sequence PGLSGA. Residues 143-159 form a helical membrane-spanning segment; sequence FTYLVGVYVALISFMGW. Residues 160–176 are Cytoplasmic-facing; the sequence is RAMAGLRLVGAAWRWTE. Residues 177–195 traverse the membrane as a helical segment; that stretch reads LAAGGGALLFILSDLTIAL. The Extracellular portion of the chain corresponds to 196–206; the sequence is NKFCFPVPYSR. A helical membrane pass occupies residues 207–225; it reads ALIMSTYYAAQMLIALSAV. The Cytoplasmic segment spans residues 226-241; it reads ESREPVGEDYRLSKAD.

The protein belongs to the TMEM86 family. In terms of tissue distribution, highly expressed in the jejunum, white adipose tissue, kidney and macrophages.

Its subcellular location is the endoplasmic reticulum membrane. It carries out the reaction a 1-O-(1Z-alkenyl)-sn-glycero-3-phosphocholine + H2O = a 2,3-saturated aldehyde + sn-glycerol 3-phosphocholine. The catalysed reaction is a 1-O-(1Z-alkenyl)-sn-glycero-3-phosphoethanolamine + H2O = a 2,3-saturated aldehyde + sn-glycero-3-phosphoethanolamine. Functionally, catalyzes the hydrolysis of the vinyl ether bond of choline or ethanolamine lysoplasmalogens, forming fatty aldehyde and glycerophosphocholine or glycerophosphoethanolamine, respectively and is specific for the sn-2-deacylated (lyso) form of plasmalogen. Plays an important role in lysoplasmalogen metabolism in the adipocyte tissue and macrophages. In Mus musculus (Mouse), this protein is Lysoplasmalogenase TMEM86A (Tmem86a).